A 379-amino-acid chain; its full sequence is Alternative oxidase 1, mitochondrial (379 aa).

The segment covering 33–50 has biased composition (low complexity); that stretch reads TTTTSTKSRSSTSTAATT. The interval 33–76 is disordered; the sequence is TTTTSTKSRSSTSTAATTVGNSNPKSPIDEDNLEKPGTIPTKHK. 3 residues coordinate Fe cation: Glu-180, Glu-219, and His-222. Residues 234-256 form a helical membrane-spanning segment; the sequence is WFTRSIIYIGQGVFTNIFFLVYL. Fe cation is bound by residues Glu-270, Glu-271, Glu-326, and His-329.

This sequence belongs to the alternative oxidase family. Requires Fe cation as cofactor.

It localises to the mitochondrion inner membrane. Its function is as follows. Catalyzes cyanide-resistant oxygen consumption. May increase respiration when the cytochrome respiratory pathway is restricted, or in response to low temperatures. The polypeptide is Alternative oxidase 1, mitochondrial (AOX1) (Candida albicans (Yeast)).